Consider the following 426-residue polypeptide: Peptidoglycan DD-endopeptidase ShyB (426 aa).

The N-terminal stretch at 1–21 is a signal peptide; it reads MGQFRFLALIVAVLCFSVALF. The span at 32–48 shows a compositional bias: polar residues; that stretch reads SYSVPLNQSVNTSQPPS. The disordered stretch occupies residues 32 to 55; the sequence is SYSVPLNQSVNTSQPPSSEMVPSD. Zn(2+)-binding residues include His291, Asp295, and His372.

It belongs to the peptidase M23B family. Monomer. It depends on Zn(2+) as a cofactor.

It localises to the periplasm. It functions in the pathway cell wall degradation; peptidoglycan degradation. With respect to regulation, not inhibited by metal chelator EDTA. In terms of biological role, cell wall peptidoglycan (PG) DD-endopeptidase, which may act as a substitute for other zinc-dependent PG endopeptidases (ShyA and ShyC) during zinc starvation. Hydrolyzes peptide cross-links which covalently connect adjacent PG strands probably to allow insertion of new glycans and thus cell wall expansion. Degrades purified whole PG sacculi in vitro. It is unclear how it is able to function in low zinc environments, but that may possibly be due to binding zinc with very high affinity, utilizing an alternative metal cofactor or that it may function independently of a bound metal cofactor. This chain is Peptidoglycan DD-endopeptidase ShyB, found in Vibrio cholerae serotype O1 (strain ATCC 39315 / El Tor Inaba N16961).